The primary structure comprises 37 residues: Cytochrome b6-f complex subunit 5 (37 aa).

Residues 5–25 (FLLGIILGLIPITLIGLFVTA) traverse the membrane as a helical segment.

This sequence belongs to the PetG family. The 4 large subunits of the cytochrome b6-f complex are cytochrome b6, subunit IV (17 kDa polypeptide, PetD), cytochrome f and the Rieske protein, while the 4 small subunits are PetG, PetL, PetM and PetN. The complex functions as a dimer.

The protein localises to the plastid membrane. In terms of biological role, component of the cytochrome b6-f complex, which mediates electron transfer between photosystem II (PSII) and photosystem I (PSI), cyclic electron flow around PSI, and state transitions. PetG is required for either the stability or assembly of the cytochrome b6-f complex. This is Cytochrome b6-f complex subunit 5 from Cuscuta obtusiflora (Peruvian dodder).